We begin with the raw amino-acid sequence, 364 residues long: tRNA 2-selenouridine synthase (364 aa).

Residues 12 to 135 enclose the Rhodanese domain; the sequence is FLNDRPMMDT…MRTFLLDTTE (124 aa). Cys95 (S-selanylcysteine intermediate) is an active-site residue.

Belongs to the SelU family. As to quaternary structure, monomer.

The enzyme catalyses 5-methylaminomethyl-2-thiouridine(34) in tRNA + selenophosphate + (2E)-geranyl diphosphate + H2O + H(+) = 5-methylaminomethyl-2-selenouridine(34) in tRNA + (2E)-thiogeraniol + phosphate + diphosphate. It carries out the reaction 5-methylaminomethyl-2-thiouridine(34) in tRNA + (2E)-geranyl diphosphate = 5-methylaminomethyl-S-(2E)-geranyl-thiouridine(34) in tRNA + diphosphate. It catalyses the reaction 5-methylaminomethyl-S-(2E)-geranyl-thiouridine(34) in tRNA + selenophosphate + H(+) = 5-methylaminomethyl-2-(Se-phospho)selenouridine(34) in tRNA + (2E)-thiogeraniol. The catalysed reaction is 5-methylaminomethyl-2-(Se-phospho)selenouridine(34) in tRNA + H2O = 5-methylaminomethyl-2-selenouridine(34) in tRNA + phosphate. Functionally, involved in the post-transcriptional modification of the uridine at the wobble position (U34) of tRNA(Lys), tRNA(Glu) and tRNA(Gln). Catalyzes the conversion of 2-thiouridine (S2U-RNA) to 2-selenouridine (Se2U-RNA). Acts in a two-step process involving geranylation of 2-thiouridine (S2U) to S-geranyl-2-thiouridine (geS2U) and subsequent selenation of the latter derivative to 2-selenouridine (Se2U) in the tRNA chain. The sequence is that of tRNA 2-selenouridine synthase from Pseudomonas fluorescens (strain ATCC BAA-477 / NRRL B-23932 / Pf-5).